Reading from the N-terminus, the 231-residue chain is Large ribosomal subunit protein uL1 (231 aa).

The protein belongs to the universal ribosomal protein uL1 family. In terms of assembly, part of the 50S ribosomal subunit.

Functionally, binds directly to 23S rRNA. The L1 stalk is quite mobile in the ribosome, and is involved in E site tRNA release. Protein L1 is also a translational repressor protein, it controls the translation of the L11 operon by binding to its mRNA. The sequence is that of Large ribosomal subunit protein uL1 from Acetivibrio thermocellus (strain ATCC 27405 / DSM 1237 / JCM 9322 / NBRC 103400 / NCIMB 10682 / NRRL B-4536 / VPI 7372) (Clostridium thermocellum).